A 331-amino-acid chain; its full sequence is MEYTSIADTGIEASRIGLGTWAIGGTMWGGTDEKTSIETIRAALDQGITLIDTAPAYGFGQSEEIVGKAIKEYGKRDQVILATKTALDWKNNQLFRHANRARIVEEVENSLKRLQTDYIDLYQVHWPDPLVPIEETAEVMKELYDAGKIRAIGVSNFSIEQMDTFRAVAPLHTIQPPYNLFEREMEESVLPYAKDNKITTLLYGSLCRGLLTGKMTEEYTFEGDDLRNHDPKFQKPRFKEYLSAVNQLDKLAKTRYGKSVIHLAVRWILDQPGADIALWGARKPGQLEALSEITGWTLNSEDQKDINTILENTISDPVGPEFMAPPTREEI.

Residues 20–21 (TW) and Asp-52 contribute to the NADP(+) site. Tyr-57 serves as the catalytic Proton donor. NADP(+) is bound by residues Gln-175, 203-208 (YGSLCR), Lys-214, Arg-227, 280-282 (GAR), and Gln-286.

It belongs to the aldo/keto reductase family. Aldo/keto reductase 11 subfamily. Monomer.

Its function is as follows. Aldo-keto reductase (AKR) that displays broad substrate specificity in vitro. Is able to reduce the standard AKR substrates DL-glyceraldehyde, D-erythrose, methylglyoxal, p-nitrobenzaldehyde, benzaldehyde and butyraldehyde, in the presence of NADPH. Cannot use NADH as a cosubstrate. Does not act on glucose, 2-pyridine carboxyaldehyde, fructose and xylose. The physiological function of this enzyme is not clear. May play a role in bacterial stress response and/or in detoxification of reactive aldehydes. The protein is Aldo-keto reductase YhdN (yhdN) of Bacillus subtilis (strain 168).